The following is a 636-amino-acid chain: Carbon monoxide dehydrogenase 2 (636 aa).

Residues Cys-39, Cys-47, Cys-48, Cys-51, Cys-56, and Cys-70 each coordinate [4Fe-4S] cluster. [Ni-4Fe-5S] cluster contacts are provided by His-261, Cys-295, Cys-333, Cys-446, Cys-476, and Cys-526.

Belongs to the Ni-containing carbon monoxide dehydrogenase family. Homodimer. It depends on [4Fe-4S] cluster as a cofactor. [Ni-4Fe-5S] cluster serves as cofactor.

It localises to the cytoplasm. The protein resides in the cell membrane. It carries out the reaction CO + 2 oxidized [2Fe-2S]-[ferredoxin] + H2O = 2 reduced [2Fe-2S]-[ferredoxin] + CO2 + 2 H(+). Its activity is regulated as follows. Inactivated by O(2). CODH oxidizes carbon monoxide coupled, via CooF, to the reduction of a hydrogen cation by a hydrogenase (possibly CooH). The protein is Carbon monoxide dehydrogenase 2 (cooS2) of Carboxydothermus hydrogenoformans (strain ATCC BAA-161 / DSM 6008 / Z-2901).